The chain runs to 100 residues: ATP synthase subunit c (100 aa).

Helical transmembrane passes span 27–47 (SVIA…IGMG) and 72–92 (FIAL…TLIV).

It belongs to the ATPase C chain family. In terms of assembly, F-type ATPases have 2 components, F(1) - the catalytic core - and F(0) - the membrane proton channel. F(1) has five subunits: alpha(3), beta(3), gamma(1), delta(1), epsilon(1). F(0) has three main subunits: a(1), b(2) and c(10-14). The alpha and beta chains form an alternating ring which encloses part of the gamma chain. F(1) is attached to F(0) by a central stalk formed by the gamma and epsilon chains, while a peripheral stalk is formed by the delta and b chains.

It localises to the cell inner membrane. Its function is as follows. F(1)F(0) ATP synthase produces ATP from ADP in the presence of a proton or sodium gradient. F-type ATPases consist of two structural domains, F(1) containing the extramembraneous catalytic core and F(0) containing the membrane proton channel, linked together by a central stalk and a peripheral stalk. During catalysis, ATP synthesis in the catalytic domain of F(1) is coupled via a rotary mechanism of the central stalk subunits to proton translocation. Functionally, key component of the F(0) channel; it plays a direct role in translocation across the membrane. A homomeric c-ring of between 10-14 subunits forms the central stalk rotor element with the F(1) delta and epsilon subunits. The polypeptide is ATP synthase subunit c (Campylobacter concisus (strain 13826)).